The primary structure comprises 449 residues: tRNA-2-methylthio-N(6)-dimethylallyladenosine synthase (449 aa).

Positions 7–124 (DAFYIHTFGC…LPLLIKQVQQ (118 aa)) constitute an MTTase N-terminal domain. 6 residues coordinate [4Fe-4S] cluster: cysteine 16, cysteine 52, cysteine 87, cysteine 163, cysteine 167, and cysteine 170. The region spanning 149-379 (RSSSMSAFVP…IECQNRISAS (231 aa)) is the Radical SAM core domain. In terms of domain architecture, TRAM spans 382-445 (SQAVGSVVEV…SATLLGEPLI (64 aa)).

Belongs to the methylthiotransferase family. MiaB subfamily. In terms of assembly, monomer. It depends on [4Fe-4S] cluster as a cofactor.

The protein localises to the cytoplasm. It carries out the reaction N(6)-dimethylallyladenosine(37) in tRNA + (sulfur carrier)-SH + AH2 + 2 S-adenosyl-L-methionine = 2-methylsulfanyl-N(6)-dimethylallyladenosine(37) in tRNA + (sulfur carrier)-H + 5'-deoxyadenosine + L-methionine + A + S-adenosyl-L-homocysteine + 2 H(+). Its function is as follows. Catalyzes the methylthiolation of N6-(dimethylallyl)adenosine (i(6)A), leading to the formation of 2-methylthio-N6-(dimethylallyl)adenosine (ms(2)i(6)A) at position 37 in tRNAs that read codons beginning with uridine. This is tRNA-2-methylthio-N(6)-dimethylallyladenosine synthase from Chlorobium chlorochromatii (strain CaD3).